Here is a 67-residue protein sequence, read N- to C-terminus: MPQLDTSTWSITIMSMIMTLFIVFQLKISKYLYPSNPEPKSMTTLKQRNPWEKKWTKIYSPLSLPQQ.

Residues 8–24 (TWSITIMSMIMTLFIVF) form a helical membrane-spanning segment. At Lys54 the chain carries N6-acetyllysine; alternate. Lys54 bears the N6-succinyllysine; alternate mark. Lys57 carries the N6-acetyllysine modification.

This sequence belongs to the ATPase protein 8 family. As to quaternary structure, component of the ATP synthase complex composed at least of ATP5F1A/subunit alpha, ATP5F1B/subunit beta, ATP5MC1/subunit c (homooctomer), MT-ATP6/subunit a, MT-ATP8/subunit 8, ATP5ME/subunit e, ATP5MF/subunit f, ATP5MG/subunit g, ATP5MK/subunit k, ATP5MJ/subunit j, ATP5F1C/subunit gamma, ATP5F1D/subunit delta, ATP5F1E/subunit epsilon, ATP5PF/subunit F6, ATP5PB/subunit b, ATP5PD/subunit d, ATP5PO/subunit OSCP. ATP synthase complex consists of a soluble F(1) head domain (subunits alpha(3) and beta(3)) - the catalytic core - and a membrane F(0) domain - the membrane proton channel (subunits c, a, 8, e, f, g, k and j). These two domains are linked by a central stalk (subunits gamma, delta, and epsilon) rotating inside the F1 region and a stationary peripheral stalk (subunits F6, b, d, and OSCP). Interacts with PRICKLE3.

Its subcellular location is the mitochondrion membrane. In terms of biological role, subunit 8, of the mitochondrial membrane ATP synthase complex (F(1)F(0) ATP synthase or Complex V) that produces ATP from ADP in the presence of a proton gradient across the membrane which is generated by electron transport complexes of the respiratory chain. ATP synthase complex consist of a soluble F(1) head domain - the catalytic core - and a membrane F(1) domain - the membrane proton channel. These two domains are linked by a central stalk rotating inside the F(1) region and a stationary peripheral stalk. During catalysis, ATP synthesis in the catalytic domain of F(1) is coupled via a rotary mechanism of the central stalk subunits to proton translocation. In vivo, can only synthesize ATP although its ATP hydrolase activity can be activated artificially in vitro. Part of the complex F(0) domain. In Felis catus (Cat), this protein is ATP synthase F(0) complex subunit 8.